A 763-amino-acid chain; its full sequence is Sphingoid long-chain bases kinase 1 (763 aa).

Residues 34-81 form a disordered region; that stretch reads TGGSQQSSPIVFPEKRNKKVKASSRRGEVTNDPQVKPKPDEHRIDIGG. The span at 58-81 shows a compositional bias: basic and acidic residues; the sequence is RRGEVTNDPQVKPKPDEHRIDIGG. One can recognise a DAGKc domain in the interval 245 to 384; that stretch reads KSAPKMLVIL…TDVFAVEWIH (140 aa). ATP is bound by residues 255–257 and Thr-287; that span reads NPR. 313–316 serves as a coordination point for substrate; sequence GGDG. The active-site Proton donor/acceptor is Asp-315. ATP is bound by residues Glu-320, 345–347, and Arg-418; that span reads GSD. A disordered region spans residues 561-603; the sequence is MGLTSVQDPPTRCSWGNTGGQDREDISSTVSDPGPIWDAGPKW. 733–735 contacts ATP; it reads DGE.

In terms of tissue distribution, expressed in roots, stems, leaves and at higher levels in flowers.

Its function is as follows. Involved in the production of sphingolipid metabolites. Active on sphingosine, phytosphingosine (PHS, 4-hydroxysphinganine), D-erythro-dihydrosphingosine, D-erythro-sphingosine and trans-4, trans-8-sphingadienine, an LCB found exclusively in plants, but not on N-acetyl-dihydrosphingosine (C2-dihydroceramide) and D-threo-dihydrosphingosine. This is Sphingoid long-chain bases kinase 1 (LCBK1) from Arabidopsis thaliana (Mouse-ear cress).